Here is a 387-residue protein sequence, read N- to C-terminus: ADP,ATP carrier protein 2, mitochondrial (387 aa).

The N-terminal 77 residues, 1 to 77, are a transit peptide targeting the mitochondrion; that stretch reads MADQANQPTV…PVMPTPLFAN (77 aa). Solcar repeat units follow at residues 85–178, 190–282, and 290–376; these read KNFM…FKRL, KWFA…IKPV, and DNFF…LQIL. The next 5 helical transmembrane spans lie at 87–114, 155–179, 188–208, 258–279, and 293–313; these read FMIDFMMGGVSAAVSKTAAAPIERVKLL, TANVIRYFPTQALNFAFKDYFKRLF, YWKWFAGNLASGGAAGASSLF, FNISCVGIIVYRGLYFGLYDSI, and FASFALGWLITNGAGLASYPI. 2 residues coordinate ADP: Arg160 and Lys172. Residue Arg317 coordinates ADP. Positions 317-322 are important for transport activity; sequence RRRMMM. The Nucleotide carrier signature motif motif lies at 317 to 322; it reads RRRMMM. A helical membrane pass occupies residues 353-373; it reads AGANILRAIAGAGVLSGYDQL.

It belongs to the mitochondrial carrier (TC 2.A.29) family. In terms of assembly, monomer.

Its subcellular location is the mitochondrion inner membrane. The catalysed reaction is ADP(in) + ATP(out) = ADP(out) + ATP(in). With respect to regulation, the matrix-open state (m-state) is inhibited by the membrane-permeable bongkrekic acid (BKA). The cytoplasmic-open state (c-state) is inhibited by the membrane-impermeable toxic inhibitor carboxyatractyloside (CATR). ADP:ATP antiporter that mediates import of ADP into the mitochondrial matrix for ATP synthesis, and export of ATP out to fuel the cell. Cycles between the cytoplasmic-open state (c-state) and the matrix-open state (m-state): operates by the alternating access mechanism with a single substrate-binding site intermittently exposed to either the cytosolic (c-state) or matrix (m-state) side of the inner mitochondrial membrane. In Zea mays (Maize), this protein is ADP,ATP carrier protein 2, mitochondrial (ANT2).